The chain runs to 438 residues: MLRFAPSPTGDMHTGNLRAAIFNYILAKQRGEKFLVRIEDTDMERNIEGKDKEILSLLNLFGMVWDELVYQSHNFPRHAQMAEYLLSQGRAFYCYCSKEFLDQKREEALAQKLPFRYHDAWAEIEKDSTQKPVIRLRGASEEICFKDEIKGIVSFKPHEVDSFVIVREDGIPTYNFACAIDDMLYDVSFIVRGEDHVSNTPKQMLIQRGVGYEKLLQYAHLPILLNEEGKKMSKRDNASSVKWLLEEGYLPQAIANYLILMGNKTPTEVFALKEAIEWFDITHVAKAPAKFDLDKLRFLNREHFKRLSEQDLAFLLDHKDPSVGGLAKLYLQESSTLNELRPKIDALFAPKIAQGEFASAMILLYPHLRAMIEEFSPALKDFEAFKKEAMERSGLKGKPFFKSLRLLLTGSENGPELSDLFEYARFFFNDIIRLKEPS.

A 'HIGH' region motif is present at residues 6–16 (PSPTGDMHTGN). Positions 231-235 (KMSKR) match the 'KMSKS' region motif. Residue lysine 234 participates in ATP binding.

It belongs to the class-I aminoacyl-tRNA synthetase family. Glutamate--tRNA ligase type 1 subfamily. As to quaternary structure, monomer.

Its subcellular location is the cytoplasm. The catalysed reaction is tRNA(Glu) + L-glutamate + ATP = L-glutamyl-tRNA(Glu) + AMP + diphosphate. Functionally, catalyzes the attachment of glutamate to tRNA(Glu) in a two-step reaction: glutamate is first activated by ATP to form Glu-AMP and then transferred to the acceptor end of tRNA(Glu). In Wolinella succinogenes (strain ATCC 29543 / DSM 1740 / CCUG 13145 / JCM 31913 / LMG 7466 / NCTC 11488 / FDC 602W) (Vibrio succinogenes), this protein is Glutamate--tRNA ligase 2.